The chain runs to 103 residues: Large ribosomal subunit protein bL21 (103 aa).

The protein belongs to the bacterial ribosomal protein bL21 family. In terms of assembly, part of the 50S ribosomal subunit. Contacts protein L20.

Its function is as follows. This protein binds to 23S rRNA in the presence of protein L20. This is Large ribosomal subunit protein bL21 from Shewanella woodyi (strain ATCC 51908 / MS32).